The primary structure comprises 497 residues: Protein root UVB sensitive 6 (497 aa).

It belongs to the RUS1 family.

Its function is as follows. Required for normal embryo development. The sequence is that of Protein root UVB sensitive 6 from Arabidopsis thaliana (Mouse-ear cress).